The primary structure comprises 649 residues: Leucine-rich repeat transmembrane protein FLRT3 (649 aa).

Positions 1–28 (MISPAWSLFLIGTKIGLFFQVAPLSVMA) are cleaved as a signal peptide. The region spanning 29–58 (KSCPSVCRCDAGFIYCNDRSLTSIPVGIPE) is the LRRNT domain. Residues 29–528 (KSCPSVCRCD…KEPYKNPNLP (500 aa)) are Extracellular-facing. Disulfide bonds link C31–C37 and C35–C44. An interaction with ADGRL3 region spans residues 38–67 (DAGFIYCNDRSLTSIPVGIPEDATTLYLQN). LRR repeat units follow at residues 59–80 (DATTLYLQNNQINNVGIPSDLK), 84–104 (KVQRIYLYHNSLDEFPTNLPK), 105–126 (YVKELHLQENNIRTITYDSLSK), 129–150 (YLEELHLDDNSVSAVSIEEGAF), 155–176 (YLRLLFLSRNHLSTIPGGLPRT), 177–197 (IEELRLDDNRISTISSPSLHG), 200–220 (SLKRLVLDGNLLNNHGLGDKV), 226–247 (NLTELSLVRNSLTAAPVNLPGT), 248–269 (SLRKLYLQDNHINRVPPNAFSY), and 272–293 (QLYRLDMSNNNLSNLPQGIFDD). Residue N226 is glycosylated (N-linked (GlcNAc...) asparagine). 2 N-linked (GlcNAc...) asparagine glycosylation sites follow: N282 and N296. Residues 305-357 (NPWYCGCKMKWVRDWLQSLPVKVNVRGLMCQAPEKVRGMAIKDLSAELFDCKD) form the LRRCT domain. An intrachain disulfide couples C309 to C334. Residues 378-405 (QGQWPAPVTKQPDIKNPKLTKDQRTTGS) form a disordered region. The span at 389–401 (PDIKNPKLTKDQR) shows a compositional bias: basic and acidic residues. Positions 405-504 (SPSRKTILIT…VCIETQTAPL (100 aa)) constitute a Fibronectin type-III domain. A helical membrane pass occupies residues 529-549 (LAAIIGGAVALVSIALLALVC). Residues 550-649 (WYVHRNGSLF…GIPDLDHSHS (100 aa)) are Cytoplasmic-facing. A disordered region spans residues 629 to 649 (ESSSNRSYRDSGIPDLDHSHS).

Monomer and homodimer. Self-associates (via leucine-rich repeats), giving rise to homooligomers. Interacts with FGFR1. Interacts (via extracellular domain) with ADGRL1/LPHN1 and ADGRL3 (via olfactomedin-like domain). Interacts (via extracellular domain) with LPHN2 (via olfactomedin-like domain). Interacts (via extracellular domain) with UNC5B (via Ig domain). May also interact (via extracellular domain) with UNC5A and UNC5C. Interacts (via extracellular domain) with UNC5D (via extracellular domain). Identified in complexes composed of FLRT3, ADGRL3 and UNC5B, respectively FLRT3, ADGRL3 and UNC5D. Interacts (via cytoplasmic domain) with ROBO1. In terms of processing, N-glycosylated. Proteolytic cleavage in the juxtamembrane region gives rise to a soluble ectodomain. Cleavage is probably effected by a metalloprotease. As to expression, detected in brain (at protein level). Detected in brain neurons, especially in basal ganglia, hippocampus dentate gyrus and CA3 region, cerebellum and in olfactory bulb.

Its subcellular location is the cell membrane. The protein resides in the presynaptic cell membrane. The protein localises to the synapse. It localises to the synaptosome. It is found in the postsynaptic density. Its subcellular location is the cell projection. The protein resides in the dendrite. The protein localises to the axon. It localises to the growth cone membrane. It is found in the cytoplasmic vesicle. Its subcellular location is the endoplasmic reticulum membrane. The protein resides in the cell junction. The protein localises to the focal adhesion. It localises to the secreted. In terms of biological role, functions in cell-cell adhesion, cell migration and axon guidance, exerting an attractive or repulsive role depending on its interaction partners. Plays a role in the spatial organization of brain neurons. Plays a role in vascular development in the retina. Plays a role in cell-cell adhesion via its interaction with ADGRL3 and probably also other latrophilins that are expressed at the surface of adjacent cells. Interaction with the intracellular domain of ROBO1 mediates axon attraction towards cells expressing NTN1. Mediates axon growth cone collapse and plays a repulsive role in neuron guidance via its interaction with UNC5B, and possibly also other UNC-5 family members. Promotes neurite outgrowth (in vitro). Mediates cell-cell contacts that promote an increase both in neurite number and in neurite length. Plays a role in the regulation of the density of glutamaergic synapses. Plays a role in fibroblast growth factor-mediated signaling cascades. Required for normal morphogenesis during embryonic development, but not for normal embryonic patterning. Required for normal ventral closure, headfold fusion and definitive endoderm migration during embryonic development. Required for the formation of a normal basement membrane and the maintenance of a normal anterior visceral endoderm during embryonic development. In Rattus norvegicus (Rat), this protein is Leucine-rich repeat transmembrane protein FLRT3 (Flrt3).